Reading from the N-terminus, the 210-residue chain is Large ribosomal subunit protein uL4 (210 aa).

Residues 44-54 (QRQGTASTLTR) are compositionally biased toward polar residues. The disordered stretch occupies residues 44–96 (QRQGTASTLTRSEVRGGGRKPYKQKGTGRARQGSIRTPLRPGGGVIFGPKPRS). Over residues 60 to 71 (GGRKPYKQKGTG) the composition is skewed to basic residues.

It belongs to the universal ribosomal protein uL4 family. Part of the 50S ribosomal subunit.

Its function is as follows. One of the primary rRNA binding proteins, this protein initially binds near the 5'-end of the 23S rRNA. It is important during the early stages of 50S assembly. It makes multiple contacts with different domains of the 23S rRNA in the assembled 50S subunit and ribosome. Functionally, forms part of the polypeptide exit tunnel. The protein is Large ribosomal subunit protein uL4 of Prochlorococcus marinus (strain MIT 9515).